We begin with the raw amino-acid sequence, 239 residues long: uncharacterized protein (239 aa).

The next 3 helical transmembrane spans lie at 125–144 (LAII…LILY), 149–171 (IFVL…FLFL), and 197–216 (SVLN…GILF).

It localises to the cell membrane. This is an uncharacterized protein from Aquifex aeolicus (strain VF5).